Here is a 405-residue protein sequence, read N- to C-terminus: 4-hydroxy-3-methylbut-2-en-1-yl diphosphate synthase (flavodoxin) (405 aa).

C297, C300, C343, and E350 together coordinate [4Fe-4S] cluster.

Belongs to the IspG family. [4Fe-4S] cluster is required as a cofactor.

It carries out the reaction (2E)-4-hydroxy-3-methylbut-2-enyl diphosphate + oxidized [flavodoxin] + H2O + 2 H(+) = 2-C-methyl-D-erythritol 2,4-cyclic diphosphate + reduced [flavodoxin]. The protein operates within isoprenoid biosynthesis; isopentenyl diphosphate biosynthesis via DXP pathway; isopentenyl diphosphate from 1-deoxy-D-xylulose 5-phosphate: step 5/6. Functionally, converts 2C-methyl-D-erythritol 2,4-cyclodiphosphate (ME-2,4cPP) into 1-hydroxy-2-methyl-2-(E)-butenyl 4-diphosphate. The chain is 4-hydroxy-3-methylbut-2-en-1-yl diphosphate synthase (flavodoxin) from Francisella tularensis subsp. tularensis (strain FSC 198).